A 366-amino-acid chain; its full sequence is D-alanine--D-alanine ligase (366 aa).

An ATP-grasp domain is found at 145–348; it reads KRLLDDAGLA…YQSLITKLIE (204 aa). 175 to 230 is an ATP binding site; that stretch reads VEQLGLPLFIKPANLGSSVGISKVNNEAEFNAALSMAFEYDLKVIIESAIVGREIE. Residues Asp-302, Glu-315, and Asn-317 each coordinate Mg(2+).

Belongs to the D-alanine--D-alanine ligase family. The cofactor is Mg(2+). Mn(2+) is required as a cofactor.

It is found in the cytoplasm. It catalyses the reaction 2 D-alanine + ATP = D-alanyl-D-alanine + ADP + phosphate + H(+). It participates in cell wall biogenesis; peptidoglycan biosynthesis. In terms of biological role, cell wall formation. In Proteus mirabilis (strain HI4320), this protein is D-alanine--D-alanine ligase.